The primary structure comprises 280 residues: MELNGFLRYKKLFIVLALLFTTILIVSLSLLAFALVVKTNGSELGVVFHQTEDNTTVIQGRSIVEQPWFIPTVAGSFGFSALAIILGLAIGLPIVKRKEKRLLEEKERQEQIAEQLQRISDQQEQQTVEIDPQQSQAQPSQPQVQQPLQPQFQQRVPLLRPAFNPNMQQRPGFNQPNQQFQPHNNFNPRMNPNMQRPGFNPNMQQRPGFNQPNQQFQPHNNFNPRMNPNMQRPGFNQPHPNQFAQPNNFNPNMQQRPGFNPNMQQRPNPSQLMPKGGLKP.

2 helical membrane passes run 13-37 (FIVL…ALVV) and 68-92 (WFIP…AIGL). Over residues 114–128 (EQLQRISDQQEQQTV) the composition is skewed to polar residues. 2 disordered regions span residues 114-149 (EQLQ…QPLQ) and 163-280 (FNPN…GLKP). Low complexity-rich tracts occupy residues 132–149 (PQQS…QPLQ) and 168–188 (QQRP…NFNP). Repeat copies occupy residues 163–168 (FNPNMQ), 170–174 (RPGFN), 186–190 (FNPRM), 191–195 (NPNMQ), 196–200 (RPGFN), 199–204 (FNPNMQ), 206–210 (RPGFN), 222–226 (FNPRM), 227–231 (NPNMQ), 232–236 (RPGFN), 249–254 (FNPNMQ), 256–260 (RPGFN), and 259–264 (FNPNMQ). The 6 X 5 AA repeats of [FM]-N-P-N-M-Q stretch occupies residues 163–264 (FNPNMQQRPG…QRPGFNPNMQ (102 aa)). Residues 170–260 (RPGFNQPNQQ…PNMQQRPGFN (91 aa)) form a 5 X 5 AA repeats of R-P-G-F-N region. The interval 186–226 (FNPRMNPNMQRPGFNPNMQQRPGFNQPNQQFQPHNNFNPRM) is 2 X 5 AA repeats of F-N-P-R-M. The segment covering 204–224 (QQRPGFNQPNQQFQPHNNFNP) has biased composition (low complexity). Over residues 235-257 (FNQPHPNQFAQPNNFNPNMQQRP) the composition is skewed to low complexity. Residues 261 to 271 (PNMQQRPNPSQ) are compositionally biased toward polar residues.

The protein localises to the cell projection. Its subcellular location is the attachment organelle membrane. Adhesin necessary for successful cytadherence and virulence. The chain is P32 adhesin from Mycoplasma genitalium (strain ATCC 33530 / DSM 19775 / NCTC 10195 / G37) (Mycoplasmoides genitalium).